Consider the following 926-residue polypeptide: Serine/threonine-protein kinase SIK2 (926 aa).

One can recognise a Protein kinase domain in the interval tyrosine 20–methionine 271. The residue at position 25 (threonine 25) is a Phosphothreonine. ATP contacts are provided by residues leucine 26–valine 34 and lysine 49. The residue at position 53 (lysine 53) is an N6-acetyllysine; by EP300. The Proton acceptor role is filled by aspartate 142. At threonine 175 the chain carries Phosphothreonine; by LKB1. A UBA domain is found at glutamate 295–glutamate 335. Phosphothreonine is present on threonine 484. Residues serine 534 and serine 587 each carry the phosphoserine modification. Composition is skewed to low complexity over residues serine 644–serine 659 and serine 742–glutamine 756. Disordered stretches follow at residues serine 644 to histidine 666, serine 742 to proline 776, and proline 801 to aspartate 896. Positions alanine 765 to leucine 774 are enriched in polar residues. Positions glutamine 822–glutamine 834 are enriched in pro residues.

The protein belongs to the protein kinase superfamily. CAMK Ser/Thr protein kinase family. SNF1 subfamily. In terms of assembly, interacts with and phosphorylates TORC2/CRTC2. The cofactor is Mg(2+). Phosphorylated at Thr-175 by STK11/LKB1 in complex with STE20-related adapter-alpha (STRADA) pseudo kinase and CAB39. Phosphorylated at Thr-484 in response to insulin in adipocytes. Post-translationally, acetylation at Lys-53 inhibits kinase activity. Deacetylated by HDAC6.

The protein resides in the cytoplasm. It is found in the endoplasmic reticulum membrane. The catalysed reaction is L-seryl-[protein] + ATP = O-phospho-L-seryl-[protein] + ADP + H(+). It catalyses the reaction L-threonyl-[protein] + ATP = O-phospho-L-threonyl-[protein] + ADP + H(+). Its activity is regulated as follows. Activated by phosphorylation on Thr-175. Serine/threonine-protein kinase that plays a role in many biological processes such as fatty acid oxidation, autophagy, immune response or glucose metabolism. Phosphorylates 'Ser-794' of IRS1 in insulin-stimulated adipocytes, potentially modulating the efficiency of insulin signal transduction. Inhibits CREB activity by phosphorylating and repressing TORCs, the CREB-specific coactivators. Phosphorylates EP300 and thus inhibits its histone acetyltransferase activity. In turn, regulates the DNA-binding ability of several transcription factors such as PPARA or MLXIPL. Also plays a role in thymic T-cell development. The polypeptide is Serine/threonine-protein kinase SIK2 (SIK2) (Homo sapiens (Human)).